Reading from the N-terminus, the 373-residue chain is Peptidoglycan recognition protein 4 (373 aa).

The first 17 residues, 1 to 17 (MLPWLLVFSALGIQAWG), serve as a signal peptide directing secretion. Asn22, Asn39, Asn109, Asn145, and Asn247 each carry an N-linked (GlcNAc...) asparagine glycan. 2 N-acetylmuramoyl-L-alanine amidase domains span residues 74-212 (TPVN…ACPG) and 235-358 (YGII…LSPG). 3 disulfides stabilise this stretch: Cys210-Cys332, Cys226-Cys270, and Cys246-Cys252. Residues Tyr263 and Tyr274 each coordinate peptidoglycan. Interaction with murein regions lie at residues 293–302 (QGSSTPGYDD) and 353–354 (RT).

It belongs to the N-acetylmuramoyl-L-alanine amidase 2 family. As to quaternary structure, homodimer; disulfide-linked. Heterodimer with PGLYRP3; disulfide-linked. Post-translationally, N-glycosylated. As to expression, detected in skin epidermis, eccrine sweat glands and ducts, mucous cells in the submandibular salivary gland, mucous cells in the throat, ciliary body epithelial cells of the eye, small intestine, colon, stomach and in mature epithelial cells of the tongue (at protein level). High expression in skin and esophagus. Expressed also to a much lesser extent in the tonsils and thymus.

Its subcellular location is the secreted. Pattern receptor that binds to murein peptidoglycans (PGN) of Gram-positive bacteria. Has bactericidal activity towards Gram-positive bacteria. May kill Gram-positive bacteria by interfering with peptidoglycan biosynthesis. Also binds to Gram-negative bacteria, and has bacteriostatic activity towards Gram-negative bacteria. Plays a role in innate immunity. This is Peptidoglycan recognition protein 4 (PGLYRP4) from Homo sapiens (Human).